Consider the following 525-residue polypeptide: MVKEELSEFEKQRLANIAERDALLKKLSLDAQSTGVFTSNMPRGTSANQSKPKKKPAPKVKKEESLLPRRTSSRLRGIAADSEIAKRKADEEYDRRQEEERAKRVRKSDSFSFNDIFVSGQKLSGDALIGVDVVTKGVAVPYQRTFGEEDIKSTDDKDLKALRKEMNSLSLWEAWEPNRIKITPERIYSMTFHPSEAKPVIFAGDKMGHLGILDASQEKPTSAVKNEDDEDDEDDDDPDPVLVTLKPHTRTISSMTVHPSKPTHLYTASYDSSIRELDLEKTSSVEKYAPESTSDDVPISGLDMAAGDPNTIYWTTLDGAFGRYDMRTKRQSSATTWQLSEKKIGGFSLYQTHPHYVATASLDRTMRLWDIRNLSHTDPTPVGEHQSRLSVSHAAFNCVGQIATSSYDDTLKLYDFSSKGISSWKPGHILDESEMKPDTIVRHNCQTGRWVTILRPQWQLNPQSAIQRFCIGNMNRFVDIYSGSGDQLAQLGGDGITAVPAVAVFHRSKNWVAGGTASGKICLWM.

Positions 34–50 (TGVFTSNMPRGTSANQS) are enriched in polar residues. 3 disordered regions span residues 34–103 (TGVF…ERAK), 214–240 (DASQEKPTSAVKNEDDEDDEDDDDPDP), and 282–301 (TSSVEKYAPESTSDDVPISG). Positions 83 to 102 (EIAKRKADEEYDRRQEEERA) are enriched in basic and acidic residues. A WD 1 repeat occupies 182–223 (ITPERIYSMTFHPSEAKPVIFAGDKMGHLGILDASQEKPTSA). The segment covering 227 to 239 (EDDEDDEDDDDPD) has biased composition (acidic residues). WD repeat units lie at residues 247-287 (PHTR…SVEK), 339-379 (LSEK…HTDP), 384-425 (EHQS…SSWK), 448-491 (GRWV…LAQL), and 494-525 (DGITAVPAVAVFHRSKNWVAGGTASGKICLWM).

Belongs to the WD repeat DDB2/WDR76 family.

Functionally, DNA-binding protein that binds to both single- and double-stranded DNA. Binds preferentially to UV-damaged DNA. May be involved in DNA-metabolic processes. This Emericella nidulans (strain FGSC A4 / ATCC 38163 / CBS 112.46 / NRRL 194 / M139) (Aspergillus nidulans) protein is DNA damage-binding protein cmr1.